A 662-amino-acid chain; its full sequence is Probable quinol oxidase subunit 1 (662 aa).

The next 2 membrane-spanning stretches (helical) occupy residues 14–34 (WMITMAQIGAPFLVIGLIAVI) and 58–78 (LMYLICAVLMFVRGGIDALLL). Residue His-102 participates in Fe(II)-heme a binding. 8 helical membrane passes run 103–123 (GVIMIIFMAMPFVFGLWNVVV), 140–160 (ISFWLFFVGMILFNLSFIIGG), 187–207 (VAIQISGIGTLMTGINFFVTI), 228–248 (FITTLIVILAFPVFTVVLALM), 273–293 (FFWVWGHPEVYIVILPAFGIY), 311–331 (MVWATAGIAFLSFLVWVHHFF), 336–356 (GALINSFFSISTMLIGVPTGV), and 376–396 (MLFSLAFIPNFLLGGVTGVML). Residues His-279, Tyr-283, His-328, and His-329 each coordinate Cu cation. The 1'-histidyl-3'-tyrosine (His-Tyr) cross-link spans 279-283 (HPEVY). His-414 serves as a coordination point for heme a3. The next 5 membrane-spanning stretches (helical) occupy residues 415–435 (FHYTLVTGVVFACLAGLIFWY), 451–471 (CFWLFMIGFNVCFLPQFILGL), 492–512 (VISTIGALLMAVGFLFLVVSI), 586–605 (THTGVIMGIFMLLGGFFLIF), and 609–628 (IPAAICLVGILGSLVYQSFV). A Fe(II)-heme a-binding site is contributed by His-416.

This sequence belongs to the heme-copper respiratory oxidase family. Requires Cu cation as cofactor. Ferriheme a is required as a cofactor. It depends on Heme A3. as a cofactor.

Its subcellular location is the cell membrane. It carries out the reaction 2 a quinol + O2 = 2 a quinone + 2 H2O. The protein operates within energy metabolism; oxidative phosphorylation. Catalyzes quinol oxidation with the concomitant reduction of oxygen to water. In Staphylococcus haemolyticus (strain JCSC1435), this protein is Probable quinol oxidase subunit 1 (qoxB).